We begin with the raw amino-acid sequence, 326 residues long: Nicotianamine synthase 2 (326 aa).

Belongs to the nicotianamine synthase (NAS)-like family. As to expression, expressed in roots.

The enzyme catalyses 3 S-adenosyl-L-methionine = nicotianamine + 3 S-methyl-5'-thioadenosine + 3 H(+). Its function is as follows. Synthesizes nicotianamine, a polyamine that is the first intermediate in the synthesis of the phytosiderophores of the mugineic acid type found in gramineae which serve as a sensor for the physiological iron status within the plant, and/or might be involved in the transport of iron. The polypeptide is Nicotianamine synthase 2 (NAS2) (Oryza sativa subsp. indica (Rice)).